We begin with the raw amino-acid sequence, 214 residues long: uncharacterized protein (214 aa).

2 CBS domains span residues Met-7–Ile-65 and Met-69–Val-129.

This is an uncharacterized protein from Methanocaldococcus jannaschii (strain ATCC 43067 / DSM 2661 / JAL-1 / JCM 10045 / NBRC 100440) (Methanococcus jannaschii).